The chain runs to 1008 residues: DNA polymerase catalytic subunit (1008 aa).

It belongs to the DNA polymerase type-B family.

The protein localises to the host nucleus. The enzyme catalyses DNA(n) + a 2'-deoxyribonucleoside 5'-triphosphate = DNA(n+1) + diphosphate. The polypeptide is DNA polymerase catalytic subunit (9) (Equine herpesvirus 2 (strain 86/87) (EHV-2)).